Here is a 66-residue protein sequence, read N- to C-terminus: Cysteine proteinase inhibitor (66 aa).

The short motif at 18 to 22 (QVVAG) is the Secondary area of contact element.

It belongs to the cystatin family. Phytocystatin subfamily. In tubers of untreated plants. After ABA treatment or mechanical wounding is mostly accumulated in leaves, to a lesser extent in stems, but not in roots.

The chain is Cysteine proteinase inhibitor (CYS-PIN) from Solanum tuberosum (Potato).